The sequence spans 95 residues: UPF0045 protein CPE1503 (95 aa).

Belongs to the UPF0045 family.

This is UPF0045 protein CPE1503 from Clostridium perfringens (strain 13 / Type A).